A 328-amino-acid chain; its full sequence is Galactinol synthase 10 (328 aa).

K106 is a catalytic residue. Mn(2+)-binding residues include D122, D124, and H248.

This sequence belongs to the glycosyltransferase 8 family. Galactosyltransferase subfamily. The cofactor is a divalent metal cation.

The protein resides in the cytoplasm. It catalyses the reaction myo-inositol + UDP-alpha-D-galactose = alpha-D-galactosyl-(1-&gt;3)-1D-myo-inositol + UDP + H(+). Its function is as follows. Galactinol synthase involved in the biosynthesis of raffinose family oligosaccharides (RFOs) that function as osmoprotectants. May promote plant stress tolerance. This chain is Galactinol synthase 10 (GOLS10), found in Arabidopsis thaliana (Mouse-ear cress).